The following is a 154-amino-acid chain: Ribonuclease H (154 aa).

The RNase H type-1 domain occupies 1–142; it reads MTKHVEIFTD…CDELARTAAE (142 aa). 4 residues coordinate Mg(2+): D10, E48, D70, and D134.

Belongs to the RNase H family. In terms of assembly, monomer. Requires Mg(2+) as cofactor.

The protein resides in the cytoplasm. It catalyses the reaction Endonucleolytic cleavage to 5'-phosphomonoester.. Endonuclease that specifically degrades the RNA of RNA-DNA hybrids. The sequence is that of Ribonuclease H from Vibrio campbellii (strain ATCC BAA-1116).